The sequence spans 298 residues: Probable endonuclease 4 (298 aa).

Residues H69, H111, E146, D180, H183, H215, D228, H230, and E260 each coordinate Zn(2+).

This sequence belongs to the AP endonuclease 2 family. Zn(2+) serves as cofactor.

It carries out the reaction Endonucleolytic cleavage to 5'-phosphooligonucleotide end-products.. Its function is as follows. Endonuclease IV plays a role in DNA repair. It cleaves phosphodiester bonds at apurinic or apyrimidinic (AP) sites, generating a 3'-hydroxyl group and a 5'-terminal sugar phosphate. This chain is Probable endonuclease 4, found in Bacillus cytotoxicus (strain DSM 22905 / CIP 110041 / 391-98 / NVH 391-98).